Here is a 103-residue protein sequence, read N- to C-terminus: NADH-quinone oxidoreductase subunit K (103 aa).

3 helical membrane-spanning segments follow: residues 6–26, 30–50, and 66–86; these read IEYY…GFLL, LLVL…TLVA, and FFVI…VLAF.

This sequence belongs to the complex I subunit 4L family. NDH-1 is composed of 14 different subunits. Subunits NuoA, H, J, K, L, M, N constitute the membrane sector of the complex.

The protein localises to the cell inner membrane. It catalyses the reaction a quinone + NADH + 5 H(+)(in) = a quinol + NAD(+) + 4 H(+)(out). NDH-1 shuttles electrons from NADH, via FMN and iron-sulfur (Fe-S) centers, to quinones in the respiratory chain. The immediate electron acceptor for the enzyme in this species is believed to be ubiquinone. Couples the redox reaction to proton translocation (for every two electrons transferred, four hydrogen ions are translocated across the cytoplasmic membrane), and thus conserves the redox energy in a proton gradient. The sequence is that of NADH-quinone oxidoreductase subunit K from Sorangium cellulosum (strain So ce56) (Polyangium cellulosum (strain So ce56)).